Here is a 394-residue protein sequence, read N- to C-terminus: Elongation factor Tu (394 aa).

In terms of domain architecture, tr-type G spans 10–204; that stretch reads KPHVNVGTIG…ALDSYIPTPE (195 aa). The segment at 19–26 is G1; that stretch reads GHVDHGKT. Residue 19-26 participates in GTP binding; the sequence is GHVDHGKT. Threonine 26 provides a ligand contact to Mg(2+). Positions 60–64 are G2; sequence GITIN. Positions 81–84 are G3; sequence DCPG. Residues 81–85 and 136–139 contribute to the GTP site; these read DCPGH and NKCD. Positions 136 to 139 are G4; that stretch reads NKCD. The segment at 174-176 is G5; sequence SAL.

Belongs to the TRAFAC class translation factor GTPase superfamily. Classic translation factor GTPase family. EF-Tu/EF-1A subfamily. As to quaternary structure, monomer.

It localises to the cytoplasm. It catalyses the reaction GTP + H2O = GDP + phosphate + H(+). Its function is as follows. GTP hydrolase that promotes the GTP-dependent binding of aminoacyl-tRNA to the A-site of ribosomes during protein biosynthesis. The sequence is that of Elongation factor Tu from Neisseria gonorrhoeae (strain ATCC 700825 / FA 1090).